We begin with the raw amino-acid sequence, 90 residues long: Caspase recruitment domain-containing protein 18 (90 aa).

The region spanning 1–90 is the CARD domain; sequence MADQLLRKKR…PQLASKMGLH (90 aa).

Interacts with pro-CASP1. Interacts with CARD8. As to expression, primarily expressed in the heart and placenta.

Functionally, inhibits generation of IL-1-beta by interacting with caspase-1 and preventing its association with RIP2. Down-regulates the release of IL1B. The protein is Caspase recruitment domain-containing protein 18 (CARD18) of Homo sapiens (Human).